Here is a 446-residue protein sequence, read N- to C-terminus: Na(+)-translocating NADH-quinone reductase subunit A (446 aa).

Belongs to the NqrA family. In terms of assembly, composed of six subunits; NqrA, NqrB, NqrC, NqrD, NqrE and NqrF.

It carries out the reaction a ubiquinone + n Na(+)(in) + NADH + H(+) = a ubiquinol + n Na(+)(out) + NAD(+). This reaction is tightly coupled to the Na(+) pumping activity and specifically requires Na(+) for activity. Inhibited by korormicin and 2-N-heptyl-4-hydroxyquinoline N-oxide (HQNO). Functionally, NQR complex catalyzes the reduction of ubiquinone-1 to ubiquinol by two successive reactions, coupled with the transport of Na(+) ions from the cytoplasm to the periplasm. NqrA to NqrE are probably involved in the second step, the conversion of ubisemiquinone to ubiquinol. In Vibrio alginolyticus, this protein is Na(+)-translocating NADH-quinone reductase subunit A.